We begin with the raw amino-acid sequence, 386 residues long: Cytochrome b (386 aa).

4 helical membrane-spanning segments follow: residues 32–52, 76–98, 113–133, and 179–199; these read FGSL…TLAM, WLIR…LHMG, TWNI…LGYV, and FFSL…MHLI. Positions 82 and 96 each coordinate heme b. H183 and H197 together coordinate heme b. H202 contributes to the a ubiquinone binding site. 4 consecutive transmembrane segments (helical) span residues 226-246, 290-310, 322-342, and 349-369; these read FLFK…IFVL, TLGV…PYLD, LSKI…ILGA, and FIIF…IITP.

This sequence belongs to the cytochrome b family. In terms of assembly, fungal cytochrome b-c1 complex contains 10 subunits; 3 respiratory subunits, 2 core proteins and 5 low-molecular weight proteins. Cytochrome b-c1 complex is a homodimer. It depends on heme b as a cofactor.

It localises to the mitochondrion inner membrane. Component of the ubiquinol-cytochrome c reductase complex (complex III or cytochrome b-c1 complex) that is part of the mitochondrial respiratory chain. The b-c1 complex mediates electron transfer from ubiquinol to cytochrome c. Contributes to the generation of a proton gradient across the mitochondrial membrane that is then used for ATP synthesis. The chain is Cytochrome b (COB) from Trichophyton rubrum (Athlete's foot fungus).